The sequence spans 446 residues: Exodeoxyribonuclease 7 large subunit (446 aa).

Belongs to the XseA family. In terms of assembly, heterooligomer composed of large and small subunits.

Its subcellular location is the cytoplasm. It carries out the reaction Exonucleolytic cleavage in either 5'- to 3'- or 3'- to 5'-direction to yield nucleoside 5'-phosphates.. Its function is as follows. Bidirectionally degrades single-stranded DNA into large acid-insoluble oligonucleotides, which are then degraded further into small acid-soluble oligonucleotides. The polypeptide is Exodeoxyribonuclease 7 large subunit (Streptococcus pneumoniae (strain Taiwan19F-14)).